Reading from the N-terminus, the 36-residue chain is Cytochrome b6-f complex subunit 7 (36 aa).

At 1–5 (NAAAE) the chain is on the lumenal side. Residues 6–28 (IFRIAAVMNGLTLVGVAIGFVLL) form a helical membrane-spanning segment. Residues 29-36 (RIEATVEE) are Stromal-facing.

The protein belongs to the PetM family. In terms of assembly, the 4 large subunits of the cytochrome b6-f complex are cytochrome b6, subunit IV (17 kDa polypeptide, PetD), cytochrome f and the Rieske protein, while the 4 small subunits are PetG, PetL, PetM and PetN. The complex functions as a dimer.

It is found in the plastid. The protein resides in the chloroplast thylakoid membrane. Functionally, component of the cytochrome b6-f complex, which mediates electron transfer between photosystem II (PSII) and photosystem I (PSI), cyclic electron flow around PSI, and state transitions. The polypeptide is Cytochrome b6-f complex subunit 7 (Spinacia oleracea (Spinach)).